Consider the following 80-residue polypeptide: UPF0248 protein MJ1316 (80 aa).

This sequence belongs to the UPF0248 family.

This Methanocaldococcus jannaschii (strain ATCC 43067 / DSM 2661 / JAL-1 / JCM 10045 / NBRC 100440) (Methanococcus jannaschii) protein is UPF0248 protein MJ1316.